The following is a 60-amino-acid chain: Short neurotoxin 1 (60 aa).

4 disulfides stabilise this stretch: Cys3/Cys22, Cys17/Cys39, Cys41/Cys52, and Cys53/Cys58.

This sequence belongs to the three-finger toxin family. Short-chain subfamily. Type I alpha-neurotoxin sub-subfamily. In terms of tissue distribution, expressed by the venom gland.

It localises to the secreted. Binds to muscle nicotinic acetylcholine receptor (nAChR) and inhibit acetylcholine from binding to the receptor, thereby impairing neuromuscular transmission. The sequence is that of Short neurotoxin 1 from Dendroaspis polylepis polylepis (Black mamba).